The sequence spans 870 residues: Breast cancer anti-estrogen resistance protein 1 (870 aa).

Met-1 bears the N-acetylmethionine mark. One can recognise an SH3 domain in the interval 3-65 (HLNVLAKALY…PGNRLKILVG (63 aa)). The tract at residues 70-156 (KPAGPGPGPP…TFSKQTPHHP (87 aa)) is disordered. Positions 73–85 (GPGPGPPATPAQP) are enriched in pro residues. Over residues 97–111 (SQYTPMLPNTYQPQP) the composition is skewed to polar residues. Positions 115–416 (YLVPTPSKAQ…SGVYAVPPPA (302 aa)) are substrate for kinases. Tyr-128 is modified (phosphotyrosine; by SRC). Phosphoserine occurs at positions 134 and 139. The span at 135 to 151 (PQFQSPPAKQTSTFSKQ) shows a compositional bias: polar residues. At Tyr-234 the chain carries Phosphotyrosine. Tyr-249 carries the phosphotyrosine; by ABL1 modification. Thr-269 carries the post-translational modification Phosphothreonine. Phosphoserine is present on Ser-292. Phosphotyrosine is present on residues Tyr-362, Tyr-372, and Tyr-410. Disordered stretches follow at residues 411-449 (AVPP…VAGP), 609-658 (KATA…NSEG), and 715-734 (IDHD…GRTG). Residues 416-426 (AEREAPAEGKR) show a composition bias toward basic and acidic residues. Residues 427–444 (LSASSTGSTRSSQSASSL) show a composition bias toward low complexity. 3 positions are modified to phosphoserine: Ser-428, Ser-437, and Ser-639. Residues 626–655 (TDKTSSIQSRPLPSPPKFTSQDSPDGQYEN) show a composition bias toward polar residues. Positions 635–643 (RPLPSPPKF) match the SH3-binding motif. The tract at residues 746–796 (FYLEQCEANLTTLTNAVDAFFTAVATNQPPKIFVAHSKFVILSAHKLVFIG) is divergent helix-loop-helix motif.

Belongs to the CAS family. Forms complexes in vivo with PTK2/FAK1, adapter protein CRKL and LYN kinase. Heterodimerizes with NEDD9. Component of a complex comprised of SH2D3C, BCAR1/CAS, and CRK. Within the complex, interacts with SH2D3C (via C-terminus), and CRK. Part of a complex comprised of PTPRA, BCAR1, BCAR3 (via SH2 domain) and SRC; the formation of the complex is dependent on integrin mediated-tyrosine phosphorylation of PTPRA. Interacts with BCAR3 (via Ras-GEF domain); the interaction regulates adhesion-dependent serine phosphorylation. Interacts with SMAD2 and SMAD3. Interacts with NPHP1. Interacts with PTK2B/PYK2. Interacts (via C-terminus) with SH2D3C/CHAT isoform 2 (via C-terminus). Interacts with activated CSPG4. Interacts with BMX, INPPL1/SHIP2 and PEAK1. Part of a collagen-stimulated complex involved in cell migration made of CDC42, CRK, TNK2 and BCAR1/p130cas. Interacts with TNK2 via SH3 domains. Interacts (when tyrosine-phosphorylated) with tensin TNS1; the interaction is increased by phosphorylation of TNS1. In terms of processing, PTK2/FAK1 activation mediates phosphorylation at the YDYVHL motif; phosphorylation is most likely catalyzed by SRC family members. SRC-family kinases are recruited to the phosphorylated sites and can phosphorylate other tyrosine residues. Tyrosine phosphorylation is triggered by integrin-mediated adhesion of cells to the extracellular matrix. Dephosphorylated by PTPN14 at Tyr-128. Post-translationally, phosphorylated by SRC kinase in a EDN1- and PTK2B-mediated manner; phosphorylation strengthens its interaction with BCAR3 as part of the PTK2B/BCAR1/BCAR3/RAP1 signaling pathway. In terms of tissue distribution, expressed in B-cells (at protein level). Widely expressed with an abundant expression in the testis. Low level of expression seen in the liver, thymus, and peripheral blood leukocytes.

The protein resides in the cell junction. It is found in the focal adhesion. It localises to the cytoplasm. Its subcellular location is the cell projection. The protein localises to the axon. Its function is as follows. Docking protein which plays a central coordinating role for tyrosine kinase-based signaling related to cell adhesion. Implicated in induction of cell migration and cell branching. Involved in the BCAR3-mediated inhibition of TGFB signaling. The protein is Breast cancer anti-estrogen resistance protein 1 (BCAR1) of Homo sapiens (Human).